Here is a 338-residue protein sequence, read N- to C-terminus: DNA-directed RNA polymerase subunit alpha (338 aa).

The interval methionine 1–glutamate 234 is alpha N-terminal domain (alpha-NTD). The tract at residues phenylalanine 250 to tyrosine 338 is alpha C-terminal domain (alpha-CTD).

It belongs to the RNA polymerase alpha chain family. As to quaternary structure, homodimer. The RNAP catalytic core consists of 2 alpha, 1 beta, 1 beta' and 1 omega subunit. When a sigma factor is associated with the core the holoenzyme is formed, which can initiate transcription.

It carries out the reaction RNA(n) + a ribonucleoside 5'-triphosphate = RNA(n+1) + diphosphate. DNA-dependent RNA polymerase catalyzes the transcription of DNA into RNA using the four ribonucleoside triphosphates as substrates. In Paramagnetospirillum magneticum (strain ATCC 700264 / AMB-1) (Magnetospirillum magneticum), this protein is DNA-directed RNA polymerase subunit alpha.